A 337-amino-acid chain; its full sequence is Anthranilate phosphoribosyltransferase (337 aa).

5-phospho-alpha-D-ribose 1-diphosphate-binding positions include G81, 84-85, S89, 91-94, 109-117, and A121; these read GD, NVST, and KHGNRAATS. Position 81 (G81) interacts with anthranilate. S93 lines the Mg(2+) pocket. An anthranilate-binding site is contributed by N112. R167 provides a ligand contact to anthranilate. Mg(2+) is bound by residues D226 and E227.

Belongs to the anthranilate phosphoribosyltransferase family. As to quaternary structure, homodimer. It depends on Mg(2+) as a cofactor.

It carries out the reaction N-(5-phospho-beta-D-ribosyl)anthranilate + diphosphate = 5-phospho-alpha-D-ribose 1-diphosphate + anthranilate. The protein operates within amino-acid biosynthesis; L-tryptophan biosynthesis; L-tryptophan from chorismate: step 2/5. Its function is as follows. Catalyzes the transfer of the phosphoribosyl group of 5-phosphorylribose-1-pyrophosphate (PRPP) to anthranilate to yield N-(5'-phosphoribosyl)-anthranilate (PRA). The sequence is that of Anthranilate phosphoribosyltransferase from Methylorubrum extorquens (strain CM4 / NCIMB 13688) (Methylobacterium extorquens).